The chain runs to 252 residues: Serine/threonine phosphatase stp (252 aa).

A compositionally biased stretch (basic and acidic residues) spans 1–18 (MHAEFRTDRGRIRHHNED). Residues 1–23 (MHAEFRTDRGRIRHHNEDNGGVF) form a disordered region. Positions 2–242 (HAEFRTDRGR…DNITVLLVER (241 aa)) constitute a PPM-type phosphatase domain. Mn(2+) contacts are provided by aspartate 36, glycine 37, aspartate 194, and aspartate 233.

It belongs to the PP2C family. It depends on Mn(2+) as a cofactor.

The protein localises to the cytoplasm. It localises to the membrane. The enzyme catalyses O-phospho-L-seryl-[protein] + H2O = L-seryl-[protein] + phosphate. It carries out the reaction O-phospho-L-threonyl-[protein] + H2O = L-threonyl-[protein] + phosphate. With respect to regulation, activity not affected by inhibitors of phosphatases of the PPP family such as okadaic acid and cypermethrin, or by inhibitors of phosphatases of the PTP family such as sodium orthovanadate. Protein phosphatase that dephosphorylates EF-Tu. This is Serine/threonine phosphatase stp (stp) from Listeria monocytogenes serovar 1/2a (strain ATCC BAA-679 / EGD-e).